Here is a 142-residue protein sequence, read N- to C-terminus: Large ribosomal subunit protein uL13 (142 aa).

This sequence belongs to the universal ribosomal protein uL13 family. In terms of assembly, part of the 50S ribosomal subunit.

In terms of biological role, this protein is one of the early assembly proteins of the 50S ribosomal subunit, although it is not seen to bind rRNA by itself. It is important during the early stages of 50S assembly. This chain is Large ribosomal subunit protein uL13, found in Azotobacter vinelandii (strain DJ / ATCC BAA-1303).